The sequence spans 105 residues: MSALKIKKGDRVVVLSGKDKGKTGEVTKSFPKDAKVIVSGVNVATRHRKPSQANPQGGLERVEAPLHVSKVAIATADGKPTRVRFEVKDGKKVRVAVKTGETING.

Belongs to the universal ribosomal protein uL24 family. As to quaternary structure, part of the 50S ribosomal subunit.

Functionally, one of two assembly initiator proteins, it binds directly to the 5'-end of the 23S rRNA, where it nucleates assembly of the 50S subunit. In terms of biological role, one of the proteins that surrounds the polypeptide exit tunnel on the outside of the subunit. This is Large ribosomal subunit protein uL24 from Rhizorhabdus wittichii (strain DSM 6014 / CCUG 31198 / JCM 15750 / NBRC 105917 / EY 4224 / RW1) (Sphingomonas wittichii).